The sequence spans 145 residues: UPF0260 protein VS_0923 (145 aa).

Belongs to the UPF0260 family.

In Vibrio atlanticus (strain LGP32) (Vibrio splendidus (strain Mel32)), this protein is UPF0260 protein VS_0923.